The following is a 256-amino-acid chain: Putative F-box protein At3g51171 (256 aa).

One can recognise an F-box domain in the interval 1 to 44; it reads MVPLPWELEEDILSRLAAQSLVRFRSVCKRWNYLFDEKSFIKNH.

In Arabidopsis thaliana (Mouse-ear cress), this protein is Putative F-box protein At3g51171.